Reading from the N-terminus, the 367-residue chain is Regulator of fusion ref-1 (367 aa).

The span at 1-10 (MVLISTPPPA) shows a compositional bias: pro residues. The interval 1 to 24 (MVLISTPPPAYAHNRKTSQEKKRR) is disordered. Residues 11 to 24 (YAHNRKTSQEKKRR) form a basic motif 1 region. In terms of domain architecture, bHLH 1 spans 11-63 (YAHNRKTSQEKKRRDEINAKIKELQLLIQNESDNEKMTQGDVLNRAVEVVSRM). Residues 25 to 63 (DEINAKIKELQLLIQNESDNEKMTQGDVLNRAVEVVSRM) form a helix-loop-helix motif 1 region. Disordered stretches follow at residues 133–177 (RSES…RRDR) and 313–367 (ATSP…RPWE). Positions 141-157 (SSMSYRSQSSSPSTSES) are enriched in low complexity. Over residues 161-177 (IDRKEVKKNREQDRRDR) the composition is skewed to basic and acidic residues. A basic motif 2 region spans residues 162–175 (DRKEVKKNREQDRR). A bHLH 2 domain is found at 162 to 219 (DRKEVKKNREQDRRDRQGEAFDALKNFIIENKLMTSHQVEKMQRLNTLDIIIAYIQNK). The helix-loop-helix motif 2 stretch occupies residues 176-219 (DRQGEAFDALKNFIIENKLMTSHQVEKMQRLNTLDIIIAYIQNK). A compositionally biased stretch (low complexity) spans 313 to 354 (ATSPKSQQSPSYSLDSPPPSSDTSSSSIETPSTPNENSNSNP). Over residues 356 to 367 (ASRKSKLFRPWE) the composition is skewed to basic residues.

Interacts with unc-37.

Its subcellular location is the nucleus. Its function is as follows. Probable transcription factor. Binds 5'-TGCCACGTGTCCA-3' in vitro, probably via the E-box motif 5'-CA[TC][AG]TG-3'. Acts in embryonic development in a Notch-dependent manner, perhaps as a direct target of transcriptional regulator lag-1 in the Notch signaling pathway. Also acts in embryonic development in a Notch-independent manner. Plays a role in both Notch-dependent and -independent pathways in the execution of neuronal lineage decisions in the embryo. Also involved in regulating cell fate leading to formation of neuronal structures known as postdeirids. Involved in the pattern of cell fusion with a large syncytium known as hyp-7, during larval development, in hermaphrodites. Plays a role in regulating the activity of homeobox protein mab-5 in Pn.p cells. This is Regulator of fusion ref-1 from Caenorhabditis elegans.